The following is a 98-amino-acid chain: Large ribosomal subunit protein uL23 (98 aa).

It belongs to the universal ribosomal protein uL23 family. In terms of assembly, part of the 50S ribosomal subunit. Contacts protein L29, and trigger factor when it is bound to the ribosome.

Its function is as follows. One of the early assembly proteins it binds 23S rRNA. One of the proteins that surrounds the polypeptide exit tunnel on the outside of the ribosome. Forms the main docking site for trigger factor binding to the ribosome. The polypeptide is Large ribosomal subunit protein uL23 (Gluconacetobacter diazotrophicus (strain ATCC 49037 / DSM 5601 / CCUG 37298 / CIP 103539 / LMG 7603 / PAl5)).